Consider the following 243-residue polypeptide: Ribonuclease 3 (243 aa).

The RNase III domain maps to 10–146 (VNRFRKRFDT…FIGALYLDQG (137 aa)). E59 serves as a coordination point for Mg(2+). Residue D63 is part of the active site. Residues D132 and E135 each contribute to the Mg(2+) site. The active site involves E135. The DRBM domain maps to 172–241 (DFKTQFQEYV…AKSAYKQLKQ (70 aa)). Basic and acidic residues predominate over residues 219–231 (GKGKTKKESEQRA). The interval 219–243 (GKGKTKKESEQRAAKSAYKQLKQIK) is disordered.

The protein belongs to the ribonuclease III family. In terms of assembly, homodimer. Mg(2+) serves as cofactor.

The protein resides in the cytoplasm. The enzyme catalyses Endonucleolytic cleavage to 5'-phosphomonoester.. Functionally, digests double-stranded RNA. Involved in the processing of primary rRNA transcript to yield the immediate precursors to the large and small rRNAs (23S and 16S). Processes some mRNAs, and tRNAs when they are encoded in the rRNA operon. Processes pre-crRNA and tracrRNA of type II CRISPR loci if present in the organism. In Staphylococcus aureus (strain Mu3 / ATCC 700698), this protein is Ribonuclease 3.